Here is a 99-residue protein sequence, read N- to C-terminus: MANIKSAIKRVEITERNRLHNKSYKSAVKTLTKKYFDAVAAYSASPSNDALQAAQTSLSAAFSKIDKAVKRGVIHRNNGARKKARLARALNRHLANAAS.

It belongs to the bacterial ribosomal protein bS20 family.

Its function is as follows. Binds directly to 16S ribosomal RNA. The chain is Small ribosomal subunit protein bS20 from Cyanothece sp. (strain PCC 7425 / ATCC 29141).